The primary structure comprises 158 residues: Chromobox protein homolog 7 (158 aa).

Positions 11-69 (FAVESIRKKRVRKGKVEYLVKWKGWPPKYSTWEPEEHILDPRLVMAYEEKEEKDRASGY) constitute a Chromo domain. The interval 60 to 124 (KEEKDRASGY…PPPWTPMLPS (65 aa)) is disordered. The span at 68 to 78 (GYRKRGPKPKR) shows a compositional bias: basic residues.

Component of a PRC1-like complex. Distinct PRC1-like core complexes are composed of a RING1 subunit (RING1B or RING1A), one of the six PCGF proteins (PCGF1-6), one PHC protein (PHC1-3) and one of the CBX proteins (CBX2, CBX4, CBX6, CBX7 or CBX8). The composition of the PRC1 complex may differ between the PRC1 complex in pluripotent embryonic stem cells containing RNF2, CBX7 and PCGF2, and the PRC1 complex in differentiating cells containing RNF2, CBX2, CBX4 and BMI1. Interacts with RING1. Interacts with RNF2/RING1B. Interacts with PCGF1, PCGF2, PCGF3, PCGF5 and PCGF6. Interacts (via chromodomain) with histone H3K9Me3 and H3K27me3. Interacts with H3K9Me2 and H4K20Me1. Interacts (via chromodomain) with single-stranded and double-stranded RNA; RNA binding seems to be required for the localization to chromatin.

It localises to the nucleus. Its subcellular location is the chromosome. In terms of biological role, component of a Polycomb group (PcG) multiprotein PRC1-like complex, a complex class required to maintain the transcriptionally repressive state of many genes, including Hox genes, throughout development. PcG PRC1 complex acts via chromatin remodeling and modification of histones; it mediates monoubiquitination of histone H2A 'Lys-119', rendering chromatin heritably changed in its expressibility. Promotes histone H3 trimethylation at 'Lys-9' (H3K9me3). Binds to histone H3 trimethylated 'Lys-9' (H3K9me3) or at 'Lys-27' (H3K27me3). May possibly also bind trimethylated lysine residues in other proteins (in vitro). Binds non-coding, single-stranded and double-stranded RNA. Plays a role in the timely repression of differentiation-specific genes in pluripotent embryonic stem cells to maintain the undifferentiated state. Regulator of cellular lifespan by maintaining the repression of CDKN2A, but not by inducing telomerase activity. The protein is Chromobox protein homolog 7 (Cbx7) of Rattus norvegicus (Rat).